The sequence spans 161 residues: Cyclic pyranopterin monophosphate synthase (161 aa).

Substrate is bound by residues 75-77 and 113-114; these read LCH and ME. The active site involves D128.

The protein belongs to the MoaC family. In terms of assembly, homohexamer; trimer of dimers.

It catalyses the reaction (8S)-3',8-cyclo-7,8-dihydroguanosine 5'-triphosphate = cyclic pyranopterin phosphate + diphosphate. It participates in cofactor biosynthesis; molybdopterin biosynthesis. Functionally, catalyzes the conversion of (8S)-3',8-cyclo-7,8-dihydroguanosine 5'-triphosphate to cyclic pyranopterin monophosphate (cPMP). This chain is Cyclic pyranopterin monophosphate synthase, found in Salmonella arizonae (strain ATCC BAA-731 / CDC346-86 / RSK2980).